A 240-amino-acid polypeptide reads, in one-letter code: Mitochondrial transcription rescue factor 1 (240 aa).

The N-terminal 84 residues, 1–84, are a transit peptide targeting the mitochondrion; it reads MAMASVKLLA…ECIFPFSVRL (84 aa). The segment at 95–127 is disordered; the sequence is KKSLQKVDEEDSDEESHHDEMSEQEEELEDDPT. Residues serine 106 and serine 116 each carry the phosphoserine modification. Acidic residues predominate over residues 116-126; it reads SEQEEELEDDP. Positions 142-217 constitute an S4 RNA-binding domain; that stretch reads FRYDVVLKTG…LKKVFEEKTE (76 aa).

Monomer. Interacts with POLRMT. Interacts (via S4 domain) with MTRFR (via C-terminus). Associates with mitoribosomal S39 large subunit, peptidyl tRNA and nascent chain.

The protein resides in the mitochondrion matrix. Mitochondrial RNA-binding protein involved in mitochondrial transcription regulation. Functions as a protective factor to maintain proper mitochondrial RNA level during stress. Acts at the transcription level and its protective function depends on its RNA binding ability. Part of a mitoribosome-associated quality control pathway that prevents aberrant translation by responding to interruptions during elongation. As heterodimer with MTRF, ejects the unfinished nascent chain and peptidyl transfer RNA (tRNA), respectively, from stalled ribosomes. Recruitment of mitoribosome biogenesis factors to these quality control intermediates suggests additional roles for MTRES1 and MTRF during mitoribosome rescue. This is Mitochondrial transcription rescue factor 1 from Homo sapiens (Human).